The chain runs to 248 residues: tRNA uridine(34) hydroxylase (248 aa).

Residues 127–221 (RGRPLVLLDT…YFEEVGGEGY (95 aa)) enclose the Rhodanese domain. The Cysteine persulfide intermediate role is filled by Cys181.

The protein belongs to the TrhO family.

The catalysed reaction is uridine(34) in tRNA + AH2 + O2 = 5-hydroxyuridine(34) in tRNA + A + H2O. Functionally, catalyzes oxygen-dependent 5-hydroxyuridine (ho5U) modification at position 34 in tRNAs. The protein is tRNA uridine(34) hydroxylase of Xanthomonas axonopodis pv. citri (strain 306).